The following is a 180-amino-acid chain: Calcineurin subunit B type 1 (180 aa).

The N-myristoyl glycine moiety is linked to residue Gly2. 4 consecutive EF-hand domains span residues 25–60 (AELKKLYRRFQMLDKDGSGTLTTDEFLSIPDLALNP), 62–92 (LERVIQIFDQNKDNEIEFFEFVGTLATLSHK), 94–129 (TKEDKLKFLFQIYDIDCDGFISNGELFQVLKMMVGT), and 135–170 (QLQQIVDKTIIEGDYDKDGKISFDEFIHMIGNQEGI). Positions 38, 40, 42, 44, 49, 70, 72, 74, 76, 81, 107, 109, 111, and 118 each coordinate Ca(2+). Residues 138-143 (QIVDKT) form a canA/calcineurin A binding region. Residues Asp148, Asp150, Asp152, Lys154, and Glu159 each coordinate Ca(2+).

Belongs to the calcineurin regulatory subunit family. As to quaternary structure, forms a complex composed of a calmodulin-dependent catalytic subunit canA (also known as calcineurin A) and a regulatory Ca(2+)-binding subunit cnbA (also known as calcineurin B).

Functionally, regulatory subunit of calcineurin, a calcium-dependent, calmodulin stimulated protein phosphatase. Confers calcium sensitivity. Important for stalk formation. In Dictyostelium discoideum (Social amoeba), this protein is Calcineurin subunit B type 1 (cnbA).